The following is a 125-amino-acid chain: Small ribosomal subunit protein uS11 (125 aa).

A disordered region spans residues 101-125 (KDVKDVTPTPHNGTRPPKKILKREK). A compositionally biased stretch (basic residues) spans 116–125 (PPKKILKREK).

The protein belongs to the universal ribosomal protein uS11 family. In terms of assembly, part of the 30S ribosomal subunit. Interacts with proteins S7 and S18. Binds to IF-3.

Its function is as follows. Located on the platform of the 30S subunit, it bridges several disparate RNA helices of the 16S rRNA. Forms part of the Shine-Dalgarno cleft in the 70S ribosome. This chain is Small ribosomal subunit protein uS11, found in Mycoplasma sp.